A 399-amino-acid chain; its full sequence is LIM/homeobox protein Lhx5 (399 aa).

2 LIM zinc-binding domains span residues 3–61 (VHCA…RRFG) and 62–125 (TKCA…ASAI). Disordered regions lie at residues 136–185 (CTDR…GPRT) and 301–399 (PSSQ…NTVW). The segment covering 151–167 (DDTKETDNSTSSDKDTN) has biased composition (basic and acidic residues). The homeobox DNA-binding region spans 180–239 (RRGPRTTIKAKQLETLKAAFVATPKPTRHIREQLAQETGLNMRVIQVWFQNRRSKERRMK).

The protein localises to the nucleus. In terms of biological role, probably involved in the patterning of the nervous system, in particular in the early specification of the diencephalon. This is LIM/homeobox protein Lhx5 (lhx5) from Danio rerio (Zebrafish).